A 414-amino-acid chain; its full sequence is 2,3-diketo-5-methylthiopentyl-1-phosphate enolase (414 aa).

Residue K99 is the Proton acceptor of the active site. Substrate-binding positions include K148, 174-177 (KDDE), H265, G338, and 360-361 (GG). The Mg(2+) site is built by K174, D176, and E177. K174 bears the N6-carboxylysine mark.

This sequence belongs to the RuBisCO large chain family. Type IV subfamily. As to quaternary structure, homodimer. Requires Mg(2+) as cofactor.

It catalyses the reaction 5-methylsulfanyl-2,3-dioxopentyl phosphate = 2-hydroxy-5-methylsulfanyl-3-oxopent-1-enyl phosphate. It participates in amino-acid biosynthesis; L-methionine biosynthesis via salvage pathway; L-methionine from S-methyl-5-thio-alpha-D-ribose 1-phosphate: step 3/6. Its function is as follows. Catalyzes the enolization of 2,3-diketo-5-methylthiopentyl-1-phosphate (DK-MTP-1-P) into 2-hydroxy-3-keto-5-methylthiopentenyl-1-phosphate (HK-MTPenyl-1-P). This chain is 2,3-diketo-5-methylthiopentyl-1-phosphate enolase, found in Bacillus cereus (strain ATCC 10987 / NRS 248).